The primary structure comprises 720 residues: Inactive serine protease PAMR1 (720 aa).

An N-terminal signal peptide occupies residues 1 to 21; sequence MELGCWTQLGLTFLQLLLISS. 8 cysteine pairs are disulfide-bonded: Cys128/Cys150, Cys177/Cys199, Cys239/Cys250, Cys244/Cys260, Cys262/Cys271, Cys280/Cys329, Cys315/Cys342, and Cys414/Cys442. Positions 128-236 constitute a CUB domain; that stretch reads CGQVLRAPKG…DGFHAIFEEI (109 aa). The EGF-like domain maps to 235-272; the sequence is EITACSSSPCFHDGTCVLDKAGSYKCACLAGYTGQRCE. Sushi domains follow at residues 278 to 344 and 387 to 444; these read RNCS…ICIK and APTK…SCIP. In terms of domain architecture, Peptidase S1 spans 445–720; sequence ICGKIENVTA…FKDWIERNMK (276 aa). N-linked (GlcNAc...) asparagine glycosylation occurs at Asn451. A disulfide bond links Cys489 and Cys505. Residue Asn614 is glycosylated (N-linked (GlcNAc...) asparagine). 2 cysteine pairs are disulfide-bonded: Cys630–Cys649 and Cys661–Cys697.

Belongs to the peptidase S1 family.

Its subcellular location is the secreted. May play a role in regeneration of skeletal muscle. This is Inactive serine protease PAMR1 (PAMR1) from Pongo abelii (Sumatran orangutan).